The primary structure comprises 20 residues: T cell receptor alpha joining 3 (20 aa).

In terms of assembly, alpha-beta TR is a heterodimer composed of an alpha and beta chain; disulfide-linked. The alpha-beta TR is associated with the transmembrane signaling CD3 coreceptor proteins to form the TR-CD3 (TcR or TCR). The assembly of alpha-beta TR heterodimers with CD3 occurs in the endoplasmic reticulum where a single alpha-beta TR heterodimer associates with one CD3D-CD3E heterodimer, one CD3G-CD3E heterodimer and one CD247 homodimer forming a stable octameric structure. CD3D-CD3E and CD3G-CD3E heterodimers preferentially associate with TR alpha and TR beta chains, respectively. The association of the CD247 homodimer is the last step of TcR assembly in the endoplasmic reticulum and is required for transport to the cell surface.

The protein localises to the cell membrane. In terms of biological role, j region of the variable domain of T cell receptor (TR) alpha chain that participates in the antigen recognition. Alpha-beta T cell receptors are antigen specific receptors which are essential to the immune response and are present on the cell surface of T lymphocytes. Recognize peptide-major histocompatibility (MH) (pMH) complexes that are displayed by antigen presenting cells (APC), a prerequisite for efficient T cell adaptive immunity against pathogens. Binding of alpha-beta TR to pMH complex initiates TR-CD3 clustering on the cell surface and intracellular activation of LCK that phosphorylates the ITAM motifs of CD3G, CD3D, CD3E and CD247 enabling the recruitment of ZAP70. In turn ZAP70 phosphorylates LAT, which recruits numerous signaling molecules to form the LAT signalosome. The LAT signalosome propagates signal branching to three major signaling pathways, the calcium, the mitogen-activated protein kinase (MAPK) kinase and the nuclear factor NF-kappa-B (NF-kB) pathways, leading to the mobilization of transcription factors that are critical for gene expression and essential for T cell growth and differentiation. The T cell repertoire is generated in the thymus, by V-(D)-J rearrangement. This repertoire is then shaped by intrathymic selection events to generate a peripheral T cell pool of self-MH restricted, non-autoaggressive T cells. Post-thymic interaction of alpha-beta TR with the pMH complexes shapes TR structural and functional avidity. The chain is T cell receptor alpha joining 3 from Homo sapiens (Human).